The following is a 31-amino-acid chain: Protein YmiC (31 aa).

A helical membrane pass occupies residues 9–29; that stretch reads WSWMGAFSLSMLFWAELLWII.

The protein localises to the cell inner membrane. This chain is Protein YmiC, found in Escherichia coli (strain K12).